The primary structure comprises 222 residues: PKHD-type hydroxylase PCC8801_2196 (222 aa).

Residues 78–175 (RIHSLLFSRY…RLVVVGWIES (98 aa)) form the Fe2OG dioxygenase domain. The Fe cation site is built by H96, D98, and H156. A 2-oxoglutarate-binding site is contributed by R166.

It depends on Fe(2+) as a cofactor. The cofactor is L-ascorbate.

The protein is PKHD-type hydroxylase PCC8801_2196 of Rippkaea orientalis (strain PCC 8801 / RF-1) (Cyanothece sp. (strain PCC 8801)).